Here is a 585-residue protein sequence, read N- to C-terminus: Cysteine/serine-rich nuclear protein 3 (585 aa).

Disordered regions lie at residues 1–52 (MSGI…TPSS) and 335–395 (ELDC…GFVE). The segment covering 30–40 (SSESADSGDSV) has biased composition (low complexity). A compositionally biased stretch (polar residues) spans 41–52 (NPSTSSHFTPSS). Positions 335–349 (ELDCQGEEEEEEEDG) are enriched in acidic residues. A compositionally biased stretch (polar residues) spans 351–366 (SFCSGVTDSSTQSLAP). A compositionally biased stretch (acidic residues) spans 368–389 (ESDEEEEEEEEEEEEEDDDDDK).

It belongs to the AXUD1 family.

The protein resides in the nucleus. In terms of biological role, binds to the consensus sequence 5'-AGAGTG-3' and has transcriptional activator activity. Plays a role in apoptosis. This Homo sapiens (Human) protein is Cysteine/serine-rich nuclear protein 3 (CSRNP3).